A 142-amino-acid polypeptide reads, in one-letter code: MKKRKSRTEVKAVAQYIHMSAHKARRVVDQIRGRSYEETLMILELMPYRASYPIFKLVYSAAANANHNMGFNEADSFISKAEVNEGVIVKKLNPQARGRSYTIKRSTCHITIVLKDRTKKEPTSILERRYGWVDEYKIKYSR.

It belongs to the universal ribosomal protein uL22 family. Part of the 50S ribosomal subunit.

The protein localises to the plastid. Its subcellular location is the chloroplast. Its function is as follows. This protein binds specifically to 23S rRNA. The globular domain of the protein is located near the polypeptide exit tunnel on the outside of the subunit, while an extended beta-hairpin is found that lines the wall of the exit tunnel in the center of the 70S ribosome. The sequence is that of Large ribosomal subunit protein uL22c (rpl22) from Ceratophyllum demersum (Rigid hornwort).